A 154-amino-acid chain; its full sequence is Large ribosomal subunit protein uL30 (154 aa).

It belongs to the universal ribosomal protein uL30 family. As to quaternary structure, part of the 50S ribosomal subunit.

The polypeptide is Large ribosomal subunit protein uL30 (Methanococcus vannielii).